A 148-amino-acid polypeptide reads, in one-letter code: Large-conductance mechanosensitive channel (148 aa).

Transmembrane regions (helical) follow at residues 16–36 (VMDLAVGVIIGGAFSTIVNSI) and 89–109 (GSFITVLINFLILAFIIFLMV).

The protein belongs to the MscL family. Homopentamer.

The protein localises to the cell inner membrane. Functionally, channel that opens in response to stretch forces in the membrane lipid bilayer. May participate in the regulation of osmotic pressure changes within the cell. This chain is Large-conductance mechanosensitive channel, found in Paraburkholderia phytofirmans (strain DSM 17436 / LMG 22146 / PsJN) (Burkholderia phytofirmans).